Reading from the N-terminus, the 424-residue chain is MQRLQVVLGHLRGPADSGWMPQAAPCLSGAPQASAADVVVVHGRRTAICRAGRGGFKDTTPDELLSAVMTAVLKDVNLRPEQLGDICVGNVLQPGAGAIMARIAQFLSDIPETVPLSTVNRQCSSGLQAVASIAGGIRNGSYDIGMACGVESMSLADRGNPGNITSRLMEKEKARDCLIPMGITSENVAERFGISREKQDTFALASQQKAARAQSKGCFQAEIVPVTTTVHDDKGTKRSITVTQDEGIRPSTTMEGLAKLKPAFKKDGSTTAGNSSQVSDGAAAILLARRSKAEELGLPILGVLRSYAVVGVPPDIMGIGPAYAIPVALQKAGLTVSDVDIFEINEAFASQAAYCVEKLRLPPEKVNPLGGAVALGHPLGCTGARQVITLLNELKRRGKRAYGVVSMCIGTGMGAAAVFEYPGN.

The N-terminal 26 residues, 1–26, are a transit peptide targeting the peroxisome; it reads MQRLQVVLGHLRGPADSGWMPQAAPC. The PTS2-type peroxisomal targeting signal stretch occupies residues 1–26; that stretch reads MQRLQVVLGHLRGPADSGWMPQAAPC. 2 positions are modified to phosphothreonine: threonine 59 and threonine 60. The active-site Acyl-thioester intermediate is cysteine 123. Catalysis depends on proton acceptor residues histidine 377 and cysteine 408.

The protein belongs to the thiolase-like superfamily. Thiolase family. Homodimer. Interacts (via PTS2-type peroxisomal targeting signal region) with PEX7; leading to its translocation into peroxisomes.

The protein resides in the peroxisome. It catalyses the reaction an acyl-CoA + acetyl-CoA = a 3-oxoacyl-CoA + CoA. The enzyme catalyses 2 acetyl-CoA = acetoacetyl-CoA + CoA. It carries out the reaction tetradecanoyl-CoA + acetyl-CoA = 3-oxohexadecanoyl-CoA + CoA. The catalysed reaction is hexanoyl-CoA + acetyl-CoA = 3-oxooctanoyl-CoA + CoA. It catalyses the reaction 3-oxohexadecanedioyl-CoA + CoA = tetradecanedioyl-CoA + acetyl-CoA. The enzyme catalyses 3-oxo-(6Z,9Z,12Z,15Z,18Z,21Z)-tetracosahexaenoyl-CoA + CoA = (4Z,7Z,10Z,13Z,16Z,19Z)-docosahexaenoyl-CoA + acetyl-CoA. It functions in the pathway lipid metabolism; peroxisomal fatty acid beta-oxidation. Its function is as follows. Responsible for the thiolytic cleavage of straight chain 3-keto fatty acyl-CoAs (3-oxoacyl-CoAs). Plays an important role in fatty acid peroxisomal beta-oxidation. Catalyzes the cleavage of short, medium, long, and very long straight chain 3-oxoacyl-CoAs. The sequence is that of 3-ketoacyl-CoA thiolase, peroxisomal from Homo sapiens (Human).